The following is a 391-amino-acid chain: UPF0229 protein CA_C0580 (391 aa).

Disordered stretches follow at residues 1-20 and 75-109; these read MAIF…TIGD and VGSG…NSEG. Over residues 96–106 the composition is skewed to gly residues; sequence GSKGKGKGAGN.

It belongs to the UPF0229 family.

In Clostridium acetobutylicum (strain ATCC 824 / DSM 792 / JCM 1419 / IAM 19013 / LMG 5710 / NBRC 13948 / NRRL B-527 / VKM B-1787 / 2291 / W), this protein is UPF0229 protein CA_C0580.